The primary structure comprises 234 residues: PHD finger protein ING1 (234 aa).

Positions 129-166 (NNGKAGNAGEGGRGGRKKTRLATAASTAAASTGMTSSN) are disordered. Positions 149–165 (LATAASTAAASTGMTSS) are enriched in low complexity. The PHD-type zinc-finger motif lies at 178 to 227 (PTYCICNQVSFGEMVACDNNACKIEWFHFGCVGLKEQPKGKWYCPECATV). Zn(2+)-binding residues include Cys181, Cys183, Cys194, Cys199, His205, Cys208, Cys221, and Cys224.

This sequence belongs to the ING family. Interacts with H3K4me3 and to a lesser extent with H3K4me2. Ubiquitously expressed.

Its subcellular location is the nucleus. Histone-binding component that specifically recognizes H3 tails trimethylated on 'Lys-4' (H3K4me3), which mark transcription start sites of virtually all active genes. The sequence is that of PHD finger protein ING1 (ING1) from Arabidopsis thaliana (Mouse-ear cress).